Here is a 364-residue protein sequence, read N- to C-terminus: Spermidine/putrescine import ATP-binding protein PotA (364 aa).

The 235-residue stretch at 10 to 244 (IEVVNVSKIF…PAERFVADFI (235 aa)) folds into the ABC transporter domain. ATP is bound at residue 46-53 (GPSGCGKT).

It belongs to the ABC transporter superfamily. Spermidine/putrescine importer (TC 3.A.1.11.1) family. The complex is composed of two ATP-binding proteins (PotA), two transmembrane proteins (PotB and PotC) and a solute-binding protein (PotD).

Its subcellular location is the cell inner membrane. The catalysed reaction is ATP + H2O + polyamine-[polyamine-binding protein]Side 1 = ADP + phosphate + polyamineSide 2 + [polyamine-binding protein]Side 1.. In terms of biological role, part of the ABC transporter complex PotABCD involved in spermidine/putrescine import. Responsible for energy coupling to the transport system. This chain is Spermidine/putrescine import ATP-binding protein PotA, found in Mesorhizobium japonicum (strain LMG 29417 / CECT 9101 / MAFF 303099) (Mesorhizobium loti (strain MAFF 303099)).